The chain runs to 187 residues: MPSEIAVEKKKLKNPPLQLHYLGDRVLRQPAKRIAKVDDELRQLIRDMLQTMYSKDGIGLAAPQVGIHKQLIVIDLEPDNPANPPLVLINPTIKQVSKEICVAQEGCLSIPNVYMDVKRPEVVEIAYKDENGRPKTLKATDLLARCIQHEMDHLNGVVFVDRVDNSLTLAQELSKNGFSYQAVKPVA.

Residues Cys-107 and His-149 each coordinate Fe cation. Residue Glu-150 is part of the active site. His-153 is a Fe cation binding site.

This sequence belongs to the polypeptide deformylase family. Fe(2+) serves as cofactor.

The enzyme catalyses N-terminal N-formyl-L-methionyl-[peptide] + H2O = N-terminal L-methionyl-[peptide] + formate. Functionally, removes the formyl group from the N-terminal Met of newly synthesized proteins. Requires at least a dipeptide for an efficient rate of reaction. N-terminal L-methionine is a prerequisite for activity but the enzyme has broad specificity at other positions. This chain is Peptide deformylase, found in Microchaete diplosiphon (Fremyella diplosiphon).